A 103-amino-acid chain; its full sequence is UPF0235 protein Rleg2_3707 (103 aa).

This sequence belongs to the UPF0235 family.

This chain is UPF0235 protein Rleg2_3707, found in Rhizobium leguminosarum bv. trifolii (strain WSM2304).